Reading from the N-terminus, the 1813-residue chain is U3 small nucleolar RNA-associated protein 10 (1813 aa).

5 HEAT repeats span residues aspartate 245 to leucine 283, serine 389 to asparagine 427, glutamate 428 to proline 464, alanine 584 to lysine 621, and isoleucine 659 to serine 695. 2 disordered regions span residues isoleucine 686 to valine 705 and aspartate 887 to aspartate 912. A compositionally biased stretch (basic and acidic residues) spans arginine 690 to valine 705. HEAT repeat units lie at residues glutamine 1058–histidine 1095, lysine 1189–glycine 1228, leucine 1265–aspartate 1302, alanine 1309–lysine 1347, glutamate 1398–tryptophan 1437, leucine 1678–alanine 1715, and alanine 1769–glutamate 1806.

The protein belongs to the HEATR1/UTP10 family. As to quaternary structure, component of the ribosomal small subunit (SSU) processome.

The protein resides in the nucleus. It localises to the nucleolus. Functionally, involved in nucleolar processing of pre-18S ribosomal RNA. Involved in ribosome biosynthesis. The chain is U3 small nucleolar RNA-associated protein 10 from Coccidioides immitis (strain RS) (Valley fever fungus).